The primary structure comprises 411 residues: 2,3-bisphosphoglycerate-independent phosphoglycerate mutase (411 aa).

This sequence belongs to the BPG-independent phosphoglycerate mutase family. A-PGAM subfamily.

It catalyses the reaction (2R)-2-phosphoglycerate = (2R)-3-phosphoglycerate. It participates in carbohydrate degradation; glycolysis; pyruvate from D-glyceraldehyde 3-phosphate: step 3/5. In terms of biological role, catalyzes the interconversion of 2-phosphoglycerate and 3-phosphoglycerate. In Pyrobaculum calidifontis (strain DSM 21063 / JCM 11548 / VA1), this protein is 2,3-bisphosphoglycerate-independent phosphoglycerate mutase.